The chain runs to 195 residues: FMN-dependent NADH:quinone oxidoreductase (195 aa).

Residues Ser-10, 16–18, 91–94, and 135–138 contribute to the FMN site; these read SQS, MYNF, and TRGG.

This sequence belongs to the azoreductase type 1 family. Homodimer. Requires FMN as cofactor.

It catalyses the reaction 2 a quinone + NADH + H(+) = 2 a 1,4-benzosemiquinone + NAD(+). The catalysed reaction is N,N-dimethyl-1,4-phenylenediamine + anthranilate + 2 NAD(+) = 2-(4-dimethylaminophenyl)diazenylbenzoate + 2 NADH + 2 H(+). Functionally, quinone reductase that provides resistance to thiol-specific stress caused by electrophilic quinones. Also exhibits azoreductase activity. Catalyzes the reductive cleavage of the azo bond in aromatic azo compounds to the corresponding amines. This is FMN-dependent NADH:quinone oxidoreductase from Vibrio vulnificus (strain YJ016).